Reading from the N-terminus, the 54-residue chain is Large ribosomal subunit protein bL33 (54 aa).

It belongs to the bacterial ribosomal protein bL33 family.

In Symbiobacterium thermophilum (strain DSM 24528 / JCM 14929 / IAM 14863 / T), this protein is Large ribosomal subunit protein bL33.